The sequence spans 454 residues: uncharacterized protein (454 aa).

One can recognise a TRAM domain in the interval 1–45; it reads MAAEGKAIAKVNDLVIFVPYVVPGDVVDLQIKRKKNKYAEAEAVK. Positions 58, 64, 67, and 160 each coordinate [4Fe-4S] cluster. S-adenosyl-L-methionine-binding residues include Gln-286, Tyr-315, Glu-336, and Asp-385. The active-site Nucleophile is the Cys-412.

This sequence belongs to the class I-like SAM-binding methyltransferase superfamily. RNA M5U methyltransferase family.

This is an uncharacterized protein from Bacteroides thetaiotaomicron (strain ATCC 29148 / DSM 2079 / JCM 5827 / CCUG 10774 / NCTC 10582 / VPI-5482 / E50).